The sequence spans 475 residues: Probable proline--tRNA ligase, mitochondrial (475 aa).

The transit peptide at Met1 to Cys29 directs the protein to the mitochondrion.

It belongs to the class-II aminoacyl-tRNA synthetase family.

It is found in the mitochondrion matrix. It carries out the reaction tRNA(Pro) + L-proline + ATP = L-prolyl-tRNA(Pro) + AMP + diphosphate. Mitochondrial aminoacyl-tRNA synthetase that catalyzes the specific attachment of the proline amino acid (aa) to the homologous transfer RNA (tRNA), further participating in protein synthesis. The reaction occurs in a two steps: proline is first activated by ATP to form Pro-AMP and then transferred to the acceptor end of tRNA(Pro). The sequence is that of Probable proline--tRNA ligase, mitochondrial (Pars2) from Mus musculus (Mouse).